Reading from the N-terminus, the 652-residue chain is Beta-glucuronidase (652 aa).

A signal peptide spans methionine 1–alanine 22. 2 N-linked (GlcNAc...) asparagine glycosylation sites follow: asparagine 173 and asparagine 420. Glutamate 451 acts as the Proton donor in catalysis. Residue asparagine 631 is glycosylated (N-linked (GlcNAc...) asparagine).

This sequence belongs to the glycosyl hydrolase 2 family. Homotetramer.

It is found in the lysosome. It catalyses the reaction a beta-D-glucuronoside + H2O = D-glucuronate + an alcohol. With respect to regulation, inhibited by L-aspartic acid. Plays an important role in the degradation of dermatan and keratan sulfates. The chain is Beta-glucuronidase (GUSB) from Sus scrofa (Pig).